The chain runs to 154 residues: Small ribosomal subunit protein uS15 (154 aa).

The disordered stretch occupies residues methionine 1–tryptophan 23.

The protein belongs to the universal ribosomal protein uS15 family. Part of the 30S ribosomal subunit.

The protein is Small ribosomal subunit protein uS15 of Staphylothermus marinus (strain ATCC 43588 / DSM 3639 / JCM 9404 / F1).